Here is a 948-residue protein sequence, read N- to C-terminus: Protocadherin alpha-2 (948 aa).

A signal peptide spans 1–22 (MASSIRRGRGAWTRLLSLLLLA). The Extracellular segment spans residues 23–697 (AWEVGSGQLR…GSEATLVDVN (675 aa)). Cadherin domains follow at residues 30–133 (QLRY…PPIF), 157–242 (ASDA…EPTF), 243–350 (AQSV…TPEV), 351–455 (SITS…APAF), 456–565 (AQPE…APAL), and 588–678 (GHVV…APKA). 4 N-linked (GlcNAc...) asparagine glycosylation sites follow: Asn257, Asn265, Asn362, and Asn548. A helical membrane pass occupies residues 698 to 718 (VYLIIAICAVSSLLVLTVLLY). The Cytoplasmic portion of the chain corresponds to 719–948 (TALRCSVPPT…GNSTTDNSDQ (230 aa)). Residues 734–737 (PGKP) form a PXXP 1 repeat. The segment at 734–892 (PGKPTLVCSS…PDKFIIPGSP (159 aa)) is 5 X 4 AA repeats of P-X-X-P. Disordered regions lie at residues 754–801 (RRQR…RQPN), 829–854 (GPGGPDQQWPTVSSATPEPEAGEVSP), and 868–948 (KYGP…NSDQ). Over residues 783–795 (AEEKQLSESEYVG) the composition is skewed to basic and acidic residues. PXXP repeat units follow at residues 797–800 (PRQP), 830–833 (PGGP), 871–874 (PGNP), and 889–892 (PGSP). The segment covering 907–921 (DKSDFITFGKKEETK) has biased composition (basic and acidic residues).

The protein resides in the cell membrane. Functionally, potential calcium-dependent cell-adhesion protein. May be involved in the establishment and maintenance of specific neuronal connections in the brain. The polypeptide is Protocadherin alpha-2 (PCDHA2) (Homo sapiens (Human)).